Reading from the N-terminus, the 443-residue chain is ATP-dependent protease ATPase subunit HslU (443 aa).

ATP contacts are provided by residues I18, 60 to 65 (GVGKTE), D256, E321, and R393.

Belongs to the ClpX chaperone family. HslU subfamily. A double ring-shaped homohexamer of HslV is capped on each side by a ring-shaped HslU homohexamer. The assembly of the HslU/HslV complex is dependent on binding of ATP.

It is found in the cytoplasm. Functionally, ATPase subunit of a proteasome-like degradation complex; this subunit has chaperone activity. The binding of ATP and its subsequent hydrolysis by HslU are essential for unfolding of protein substrates subsequently hydrolyzed by HslV. HslU recognizes the N-terminal part of its protein substrates and unfolds these before they are guided to HslV for hydrolysis. This chain is ATP-dependent protease ATPase subunit HslU, found in Wigglesworthia glossinidia brevipalpis.